The sequence spans 624 residues: Cell pattern formation-associated protein ust1 (624 aa).

2 disordered regions span residues 1–24 (MSTASPLHHGHGNGSYANSPAPTG) and 43–99 (RSGS…GHSS). Over residues 43 to 62 (RSGSVPASASGSAPGSASGS) the composition is skewed to low complexity. The span at 70-85 (QHHTGHHHYSAHHTHS) shows a compositional bias: basic residues. Residues 233–339 (RVTTTLWEDE…PNIQSFLYHP (107 aa)) enclose the HTH APSES-type domain. The segment at residues 267–288 (GTKLLNVCGMSRGKRDGILKNE) is a DNA-binding region (H-T-H motif). Over residues 352–362 (AQERQAQRQRA) the composition is skewed to low complexity. Disordered stretches follow at residues 352–456 (AQER…QQQQ), 474–504 (QQAYPMTAAQQLARPSVGDRRQSAPISLNNS), and 538–624 (SWND…IHHE). Positions 369–391 (PGANGTSQAPPLMRANTTPSNGD) are enriched in polar residues. Positions 392–426 (TSTFSSGLSSLGSWTGSHDQGHASAPTTAQPSPSS) are enriched in low complexity. Residues 427 to 451 (MHNGATQMHMSLSNHGTASPTYAQS) are compositionally biased toward polar residues. A compositionally biased stretch (basic and acidic residues) spans 571-587 (LDGDDLHSPDSSDDRLA). Over residues 615-624 (VGNGSGIHHE) the composition is skewed to gly residues.

The protein belongs to the EFG1/PHD1/stuA family. In terms of processing, phosphorylated but is not a target of cAMP signaling.

Its subcellular location is the nucleus. In terms of biological role, transcription factor that regulates asexual reproduction. Binds the StuA-response elements (StRE) with the consensus sequence 5'-(A/T)CGCG(T/A)N(A/C)-3' at the promoters of target genes. Regulates dimorphism, virulence, and the sporulation program. Required for mating, gall induction, and sporogenesis in maize tissue. Regulates expression of the filament-down-regulated gene UM00205 and the teliospore-specific gene ssp1. The protein is Cell pattern formation-associated protein ust1 (ust1) of Mycosarcoma maydis (Corn smut fungus).